The primary structure comprises 351 residues: Putative glycosyltransferase 45 (351 aa).

This sequence belongs to the glycosyltransferase group 1 family.

The protein is Putative glycosyltransferase 45 (SIFV0045) of Sulfolobus islandicus filamentous virus (isolate Iceland/Hveragerdi) (SIFV).